The sequence spans 315 residues: MPDMKLFSGNSIPKLAKFIANRLYINLGKASVGRFSDGEISVQINENVRGSDVFIIQSTCSPTNDNIMELVVMVDSLRRASAGRITAVIPYFGYARQDRRVRSARVPITAKVVADFLSSIGVDRVLTVDLHAEQIQGFFDVPVDNVFGSLILLEDMLQRELKNPIVVSPDIGGVVRARAIAKLLYDTDMAIIDKRRPRANVSQIMNIIGDVANRDCILVDDMIDTGGTLCKAAEALKERGAKRVFAYATHPVFSGDAPKNLKNSVIDEVVVCDTIPLSENIELLPNVRTLTLSGMLAEAIRRISNEESISAMFEH.

ATP-binding positions include 37-39 and 96-97; these read DGE and RQ. Mg(2+) contacts are provided by His-131 and Asp-170. The active site involves Lys-194. D-ribose 5-phosphate contacts are provided by residues Arg-196, Asp-220, and 224-228; that span reads DTGGT.

It belongs to the ribose-phosphate pyrophosphokinase family. Class I subfamily. In terms of assembly, homohexamer. Requires Mg(2+) as cofactor.

Its subcellular location is the cytoplasm. It catalyses the reaction D-ribose 5-phosphate + ATP = 5-phospho-alpha-D-ribose 1-diphosphate + AMP + H(+). Its pathway is metabolic intermediate biosynthesis; 5-phospho-alpha-D-ribose 1-diphosphate biosynthesis; 5-phospho-alpha-D-ribose 1-diphosphate from D-ribose 5-phosphate (route I): step 1/1. Functionally, involved in the biosynthesis of the central metabolite phospho-alpha-D-ribosyl-1-pyrophosphate (PRPP) via the transfer of pyrophosphoryl group from ATP to 1-hydroxyl of ribose-5-phosphate (Rib-5-P). The chain is Ribose-phosphate pyrophosphokinase from Buchnera aphidicola subsp. Acyrthosiphon pisum (strain APS) (Acyrthosiphon pisum symbiotic bacterium).